An 83-amino-acid chain; its full sequence is Exodeoxyribonuclease 7 small subunit (83 aa).

This sequence belongs to the XseB family. As to quaternary structure, heterooligomer composed of large and small subunits.

The protein resides in the cytoplasm. The enzyme catalyses Exonucleolytic cleavage in either 5'- to 3'- or 3'- to 5'-direction to yield nucleoside 5'-phosphates.. Functionally, bidirectionally degrades single-stranded DNA into large acid-insoluble oligonucleotides, which are then degraded further into small acid-soluble oligonucleotides. The polypeptide is Exodeoxyribonuclease 7 small subunit (Afipia carboxidovorans (strain ATCC 49405 / DSM 1227 / KCTC 32145 / OM5) (Oligotropha carboxidovorans)).